We begin with the raw amino-acid sequence, 411 residues long: Argininosuccinate synthase (411 aa).

ATP contacts are provided by residues alanine 11–serine 19 and alanine 37. L-citrulline is bound by residues tyrosine 88 and serine 93. ATP is bound at residue serine 116–asparagine 124. L-aspartate-binding residues include threonine 120, asparagine 124, and aspartate 125. An L-citrulline-binding site is contributed by asparagine 124. The L-citrulline site is built by arginine 128, serine 181, serine 190, glutamate 271, and tyrosine 283.

The protein belongs to the argininosuccinate synthase family. In terms of assembly, homotetramer.

It localises to the cytoplasm. The protein localises to the cytosol. The enzyme catalyses L-citrulline + L-aspartate + ATP = 2-(N(omega)-L-arginino)succinate + AMP + diphosphate + H(+). Its pathway is amino-acid biosynthesis; L-arginine biosynthesis; L-arginine from L-ornithine and carbamoyl phosphate: step 2/3. It participates in nitrogen metabolism; urea cycle; (N(omega)-L-arginino)succinate from L-aspartate and L-citrulline: step 1/1. Its function is as follows. One of the enzymes of the urea cycle, the metabolic pathway transforming neurotoxic amonia produced by protein catabolism into inocuous urea in the liver of ureotelic animals. Catalyzes the formation of arginosuccinate from aspartate, citrulline and ATP and together with ASL it is responsible for the biosynthesis of arginine in most body tissues. In Xenopus laevis (African clawed frog), this protein is Argininosuccinate synthase.